Here is a 128-residue protein sequence, read N- to C-terminus: Small ribosomal subunit protein uS9 (128 aa).

Positions proline 106–arginine 128 are disordered. Residues lysine 113 to arginine 128 are compositionally biased toward basic residues.

This sequence belongs to the universal ribosomal protein uS9 family.

This chain is Small ribosomal subunit protein uS9, found in Porphyromonas gingivalis (strain ATCC 33277 / DSM 20709 / CIP 103683 / JCM 12257 / NCTC 11834 / 2561).